Here is a 382-residue protein sequence, read N- to C-terminus: MKLTEVIEGKARLVIPDPSEFSREGKFDPAWSPVFYNPRMVFNRDVSVLAVSVISPPSVLDAMSATGVRGIRYVKESGVKGEVLFNDKNPVSVELISKNLELNGITGKVLRSDANSLMHQVKVGYTDLDPFGSPAPYLFSAISSLRRKGVLGVTATDLSALEGKSRTSSKRKYGVQGSRLSYSKEAGLRVLLGKIVKEASVQEKGIRPLMGFYHDYYYRLFVKMEDGAKRADRSLESLGTLYECDRCGYSFMSSDECERKCPVCGGELKYYGPAWIGEFNDLEFLKEMKNRLTEFSYLSNSVKISELLEYLERENRFGPYYRVDVLASRLKVNMPPMNSLLGCLGDAVRTHFDPRGFKSFREFSEILECVKGSSATYETSGR.

Residues 4 to 370 (TEVIEGKARL…REFSEILECV (367 aa)) enclose the Trm1 methyltransferase domain. Residues Arg44, Arg69, Asp87, Asp113, and Ala114 each coordinate S-adenosyl-L-methionine. Residues Cys244, Cys247, Cys261, and Cys264 each coordinate Zn(2+).

The protein belongs to the class I-like SAM-binding methyltransferase superfamily. Trm1 family.

The catalysed reaction is guanosine(26) in tRNA + 2 S-adenosyl-L-methionine = N(2)-dimethylguanosine(26) in tRNA + 2 S-adenosyl-L-homocysteine + 2 H(+). Its function is as follows. Dimethylates a single guanine residue at position 26 of a number of tRNAs using S-adenosyl-L-methionine as donor of the methyl groups. The chain is tRNA (guanine(26)-N(2))-dimethyltransferase from Metallosphaera sedula (strain ATCC 51363 / DSM 5348 / JCM 9185 / NBRC 15509 / TH2).